We begin with the raw amino-acid sequence, 378 residues long: UPF0754 membrane protein BcerKBAB4_0766 (378 aa).

2 helical membrane-spanning segments follow: residues 1–21 (MNIW…GGYT) and 357–377 (YLGA…LLFL).

Belongs to the UPF0754 family.

The protein resides in the cell membrane. This is UPF0754 membrane protein BcerKBAB4_0766 from Bacillus mycoides (strain KBAB4) (Bacillus weihenstephanensis).